We begin with the raw amino-acid sequence, 253 residues long: ATP synthase subunit b 1 (253 aa).

The helical transmembrane segment at 2–22 (LIDWFTVIAELVNFLILVWLL) threads the bilayer.

Belongs to the ATPase B chain family. F-type ATPases have 2 components, F(1) - the catalytic core - and F(0) - the membrane proton channel. F(1) has five subunits: alpha(3), beta(3), gamma(1), delta(1), epsilon(1). F(0) has four main subunits: a(1), b(2) and c(10-14). The alpha and beta chains form an alternating ring which encloses part of the gamma chain. F(1) is attached to F(0) by a central stalk formed by the gamma and epsilon chains, while a peripheral stalk is formed by the delta and b chains.

It is found in the cell inner membrane. In terms of biological role, f(1)F(0) ATP synthase produces ATP from ADP in the presence of a proton or sodium gradient. F-type ATPases consist of two structural domains, F(1) containing the extramembraneous catalytic core and F(0) containing the membrane proton channel, linked together by a central stalk and a peripheral stalk. During catalysis, ATP synthesis in the catalytic domain of F(1) is coupled via a rotary mechanism of the central stalk subunits to proton translocation. Component of the F(0) channel, it forms part of the peripheral stalk, linking F(1) to F(0). This chain is ATP synthase subunit b 1, found in Prosthecochloris aestuarii (strain DSM 271 / SK 413).